Reading from the N-terminus, the 107-residue chain is Toluene 1,2-dioxygenase system ferredoxin subunit (107 aa).

The Rieske domain occupies 4–99; it reads TYILRQGDLP…IKVEGDEVHV (96 aa). [2Fe-2S] cluster is bound by residues C43, H45, C62, and H65.

This sequence belongs to the bacterial ring-hydroxylating dioxygenase ferredoxin component family. As to quaternary structure, this dioxygenase system consists of four proteins: the two subunits of the hydroxylase component (todC1 and todC2), a ferredoxin (TodB) and a ferredoxin reductase (TodA).

It participates in xenobiotic degradation; toluene degradation. This protein seems to be a 2Fe-2S ferredoxin. This is Toluene 1,2-dioxygenase system ferredoxin subunit (todB) from Pseudomonas putida (strain ATCC 700007 / DSM 6899 / JCM 31910 / BCRC 17059 / LMG 24140 / F1).